The chain runs to 1370 residues: Reverse gyrase 1 (1370 aa).

The RG N-terminal-type zinc finger occupies 6–47; sequence AASRGVYRYLCPNCGGPNSEERLSRGLPCPRCLPRLPRKGVS. Zn(2+) contacts are provided by cysteine 16, cysteine 19, cysteine 34, and cysteine 37. ATP-binding positions include glutamine 95 and 112–119; that span reads APTGVGKT. The Helicase ATP-binding domain occupies 99–287; sequence AKRLARGDSF…RKKLLEVKRR (189 aa). The short motif at 220–223 is the DEAD box element; the sequence is DDVD. Residues 643 to 1370 form a topoisomerase I region; it reads ELVRTALLVV…VSRVWGAGVG (728 aa). The Toprim domain occupies 647–825; it reads TALLVVESPN…DIKRLEFHEV (179 aa). Glutamate 653 provides a ligand contact to Mg(2+). Residues 744–772 form an RG C-terminal-type zinc finger; the sequence is IKRCLDCGYQFVDEASRCPRCGSELIRNS. 4 residues coordinate Zn(2+): cysteine 747, cysteine 750, cysteine 761, and cysteine 764. Aspartate 794 provides a ligand contact to Mg(2+). The region spanning 841–1323 is the Topo IA-type catalytic domain; sequence DDNLVDAQVV…SVFNEISDLA (483 aa). Catalysis depends on tyrosine 1028, which acts as the O-(5'-phospho-DNA)-tyrosine intermediate.

This sequence in the N-terminal section; belongs to the DEAD box helicase family. DDVD subfamily. The protein in the C-terminal section; belongs to the type IA topoisomerase family. In terms of assembly, monomer. The cofactor is Zn(2+). It depends on Mg(2+) as a cofactor.

The protein resides in the cytoplasm. It carries out the reaction ATP + H2O = ADP + phosphate + H(+). Its function is as follows. Modifies the topological state of DNA by introducing positive supercoils in an ATP-dependent process, increasing the linking number in steps of +1. Binds to single-stranded DNA, transiently cleaves and then rejoins the ends, introducing a positive supercoil in the process. The scissile phosphodiester is attacked by the catalytic tyrosine of the enzyme, resulting in the formation of a DNA-(5'-phosphotyrosyl)-enzyme intermediate. Probably involved in rewinding DNA strands in regions of the chromosome that have opened up to allow replication, transcription, DNA repair and/or for DNA protection. The protein is Reverse gyrase 1 of Aeropyrum pernix (strain ATCC 700893 / DSM 11879 / JCM 9820 / NBRC 100138 / K1).